The following is a 145-amino-acid chain: Phospholipase A2 (145 aa).

The signal sequence occupies residues 1–15; it reads MRLLVLAALLTVGAG. The residue at position 16 (Gln16) is a Pyrrolidone carboxylic acid. The propeptide at 16–22 is removed by trypsin; it reads QAGLNSR. Cystine bridges form between Cys33–Cys99, Cys49–Cys145, Cys51–Cys67, Cys66–Cys127, Cys73–Cys120, Cys83–Cys113, and Cys106–Cys118. The Ca(2+) site is built by Tyr50, Gly52, and Gly54. The active site involves His70. Residue Asp71 participates in Ca(2+) binding. Asp121 is an active-site residue.

Belongs to the phospholipase A2 family. In terms of assembly, monomer or homodimer. Ca(2+) is required as a cofactor. Post-translationally, activated by trypsin cleavage in the duodenum. Can also be activated by thrombin or autocatalytically.

It is found in the secreted. The enzyme catalyses a 1,2-diacyl-sn-glycero-3-phosphocholine + H2O = a 1-acyl-sn-glycero-3-phosphocholine + a fatty acid + H(+). It carries out the reaction 1,2-ditetradecanoyl-sn-glycero-3-phosphocholine + H2O = 1-tetradecanoyl-sn-glycero-3-phosphocholine + tetradecanoate + H(+). The catalysed reaction is 1,2-dihexadecanoyl-sn-glycero-3-phosphocholine + H2O = 1-hexadecanoyl-sn-glycero-3-phosphocholine + hexadecanoate + H(+). It catalyses the reaction 1-hexadecanoyl-2-(9Z-octadecenoyl)-sn-glycero-3-phosphocholine + H2O = 1-hexadecanoyl-sn-glycero-3-phosphocholine + (9Z)-octadecenoate + H(+). The enzyme catalyses 1-hexadecanoyl-2-(5Z,8Z,11Z,14Z-eicosatetraenoyl)-sn-glycero-3-phosphocholine + H2O = 1-hexadecanoyl-sn-glycero-3-phosphocholine + (5Z,8Z,11Z,14Z)-eicosatetraenoate + H(+). It carries out the reaction 1-hexadecanoyl-2-(9Z-octadecenoyl)-sn-glycero-3-phospho-(1'-sn-glycerol) + H2O = 1-hexadecanoyl-sn-glycero-3-phospho-(1'-sn-glycerol) + (9Z)-octadecenoate + H(+). The catalysed reaction is N-hexadecanoyl-1,2-di-(9Z-octadecenoyl)-sn-glycero-3-phosphoethanolamine + H2O = N-hexadecanoyl-1-(9Z-octadecenoyl)-sn-glycero-3-phosphoethanolamine + (9Z)-octadecenoate + H(+). It catalyses the reaction 1-hexadecanoyl-2-(9Z,12Z-octadecadienoyl)-sn-glycero-3-phosphoethanolamine + H2O = 1-hexadecanoyl-sn-glycero-3-phosphoethanolamine + (9Z,12Z)-octadecadienoate + H(+). The enzyme catalyses N,1-dihexadecanoyl-2-(9Z,12Z-octadecadienoyl)-sn-glycero-3-phosphoethanolamine + H2O = N,1-dihexadecanoyl-sn-glycero-3-phosphoethanolamine + (9Z,12Z)-octadecadienoate + H(+). Functionally, secretory calcium-dependent phospholipase A2 that primarily targets dietary phospholipids in the intestinal tract. Hydrolyzes the ester bond of the fatty acyl group attached at sn-2 position of phospholipids (phospholipase A2 activity) with preference for phosphatidylethanolamines and phosphatidylglycerols over phosphatidylcholines. May play a role in the biosynthesis of N-acyl ethanolamines that regulate energy metabolism and inflammation in the intestinal tract. Hydrolyzes N-acyl phosphatidylethanolamines to N-acyl lysophosphatidylethanolamines, which are further cleaved by a lysophospholipase D to release N-acyl ethanolamines. May act in an autocrine and paracrine manner. Has anti-helminth activity in a process regulated by gut microbiota. Upon helminth infection of intestinal epithelia, directly affects phosphatidylethanolamine contents in the membrane of helminth larvae, likely controlling an array of phospholipid-mediated cellular processes such as membrane fusion and cell division while providing for better immune recognition, ultimately reducing larvae integrity and infectivity. In Bos taurus (Bovine), this protein is Phospholipase A2 (PLA2G1B).